The following is a 161-amino-acid chain: Large ribosomal subunit protein uL16 (161 aa).

Residues 140-161 (LNKGNYKPAKTPVTADDSESSS) are disordered.

The protein belongs to the universal ribosomal protein uL16 family. As to quaternary structure, part of the 50S ribosomal subunit.

Its function is as follows. Binds 23S rRNA and is also seen to make contacts with the A and possibly P site tRNAs. The chain is Large ribosomal subunit protein uL16 from Prochlorococcus marinus (strain NATL1A).